Here is a 555-residue protein sequence, read N- to C-terminus: Alpha-copaene synthase (555 aa).

Mg(2+) contacts are provided by D312, D316, D452, S456, and E460. The DDXXD motif signature appears at 312–316 (DDTYD).

It belongs to the terpene synthase family. It depends on Mg(2+) as a cofactor. Mainly expressed in sunflower trichomes.

The enzyme catalyses (2E,6E)-farnesyl diphosphate = alpha-copaene + diphosphate. The catalysed reaction is (2E,6E)-farnesyl diphosphate = alpha-muurolene + diphosphate. It carries out the reaction (2E,6E)-farnesyl diphosphate = alpha-humulene + diphosphate. It participates in secondary metabolite biosynthesis; terpenoid biosynthesis. Its function is as follows. Involved in the biosynthesis of germacrene-derived sesquiterpene lactones. Catalyzes the cyclization of farnesyl diphosphate to alpha-copaene, delta-cadinene, alpha-muurolene, beta-caryophyllene and alpha-humulene. The polypeptide is Alpha-copaene synthase (CS) (Helianthus annuus (Common sunflower)).